Reading from the N-terminus, the 91-residue chain is Small integral membrane protein 12-A (91 aa).

Residues 12-34 (YAPYITFPVAFVVGAVGYQLEWF) form a helical membrane-spanning segment.

The protein belongs to the SMIM12 family.

It is found in the membrane. This chain is Small integral membrane protein 12-A (smim12-a), found in Xenopus laevis (African clawed frog).